A 484-amino-acid chain; its full sequence is Putative tyramine receptor 2 (484 aa).

The Extracellular segment spans residues 1 to 54 (MVRVELQAASLMNGSSAAEEPQDALVGGDACGGRRPPSVLGVRLAVPEWEVAVT). Residue asparagine 13 is glycosylated (N-linked (GlcNAc...) asparagine). A helical transmembrane segment spans residues 55–77 (AVSLSLIILITIVGNVLVVLSVF). Residues 78-87 (TYKPLRIVQN) are Cytoplasmic-facing. A helical transmembrane segment spans residues 88-109 (FFIVSLAVADLTVAVLVMPFNV). Residues 110–126 (AYSLIQRWVFGIVVCKM) are Extracellular-facing. Cysteine 124 and cysteine 203 are oxidised to a cystine. The helical transmembrane segment at 127 to 147 (WLTCDVLCCTASILNLCAIAL) threads the bilayer. Topologically, residues 148-167 (DRYWAITDPINYAQKRTLRR) are cytoplasmic. A helical membrane pass occupies residues 168–190 (VLAMIAGVWLLSGVISSPPLIGW). Residues 191 to 215 (NDWPMEFNDTTPCQLTEEQGYVIYS) are Extracellular-facing. N-linked (GlcNAc...) asparagine glycosylation is present at asparagine 198. A helical transmembrane segment spans residues 216-237 (SLGSFFIPLFIMTIVYVEIFIA). Residues 238-411 (TKRRLRERAK…LSKERRAART (174 aa)) lie on the Cytoplasmic side of the membrane. Positions 253 to 280 (SAMKQQMAAQAVPSSVPSHDQESVSSET) are enriched in polar residues. 2 disordered regions span residues 253 to 322 (SAMK…PAMV) and 350 to 383 (TTTT…PTPV). Residues 295 to 306 (EKRRKTKKKSKK) are compositionally biased toward basic residues. Residues 350–360 (TTTTTTTTTTT) show a composition bias toward low complexity. Over residues 361–378 (AVTDSPRSRTASQKGSTA) the composition is skewed to polar residues. A helical transmembrane segment spans residues 412 to 433 (LGIIMGVFVVCWLPFFLMYVIV). At 434–448 (PFCNPSCKPSPKLVN) the chain is on the extracellular side. A helical transmembrane segment spans residues 449–470 (FITWLGYINSALNPIIYTIFNL). Topologically, residues 471–484 (DFRRAFKKLLHFKT) are cytoplasmic.

Belongs to the G-protein coupled receptor 1 family.

Its subcellular location is the cell membrane. G-protein coupled receptor for tyramine, a known neurotransmitter and neuromodulator and direct precursor of octopamine. This is Putative tyramine receptor 2 (GCR2) from Locusta migratoria (Migratory locust).